The following is a 455-amino-acid chain: MWGGRFNEQVDALMAQFNNSFSFDRRMWREDIRGSIAWARQLARVGVISAEERDTLVDGLNMVYAEFADGRFEARETDEDIHTAVERRLGELVGTVAGKLHTGRSRNDQVATDVRLWTLGAIRRIDDRLRALQTALLAQAETAGAALMPGYTHLQRAQPVLLAHWLLAHFWPLQRDRERLADCAKRTATLPLGSGAIAGTPLMVDRTALAVELGMTAVSPNSIDAVSDRDFIAEFLFCAALIGTHLSRLAEDMIIYSSAEFGFVTLADAYSTGSSLMPQKKNPDSFELLRGKAGRLTGDLIAVLTMLKGLPSAYDKDLQEDKEPLFDAADTLELALPVAAGAVATARFHPDRMRAALDDAMLATDLADYLVARGVPFREAHHIVGRLVREAEQRGVALSALPLEVFLAAHPVCEPDVLQVFDFDRSVAMRRVPGATAPEAVNEQIAQARRCVEER.

Belongs to the lyase 1 family. Argininosuccinate lyase subfamily.

It localises to the cytoplasm. It carries out the reaction 2-(N(omega)-L-arginino)succinate = fumarate + L-arginine. The protein operates within amino-acid biosynthesis; L-arginine biosynthesis; L-arginine from L-ornithine and carbamoyl phosphate: step 3/3. The sequence is that of Argininosuccinate lyase from Roseiflexus sp. (strain RS-1).